The sequence spans 212 residues: Large ribosomal subunit protein uL3 (212 aa).

N5-methylglutamine is present on glutamine 153.

The protein belongs to the universal ribosomal protein uL3 family. In terms of assembly, part of the 50S ribosomal subunit. Forms a cluster with proteins L14 and L19. Post-translationally, methylated by PrmB.

In terms of biological role, one of the primary rRNA binding proteins, it binds directly near the 3'-end of the 23S rRNA, where it nucleates assembly of the 50S subunit. The chain is Large ribosomal subunit protein uL3 from Shewanella pealeana (strain ATCC 700345 / ANG-SQ1).